A 36-amino-acid chain; its full sequence is Fructose-1,6-/sedoheptulose-1,7-bisphosphate aldolase (36 aa).

The polypeptide is Fructose-1,6-/sedoheptulose-1,7-bisphosphate aldolase (cbbA) (Nitrobacter vulgaris).